A 342-amino-acid polypeptide reads, in one-letter code: Dihydroorotase (342 aa).

H13 and H15 together coordinate Zn(2+). Residues 15 to 17 (HLR) and N41 each bind substrate. The Zn(2+) site is built by K99, H136, and H174. K99 is modified (N6-carboxylysine). H136 contributes to the substrate binding site. L218 contributes to the substrate binding site. D246 lines the Zn(2+) pocket. D246 is an active-site residue. Residues H250 and A262 each coordinate substrate.

The protein belongs to the metallo-dependent hydrolases superfamily. DHOase family. Class II DHOase subfamily. As to quaternary structure, homodimer. Zn(2+) serves as cofactor.

It carries out the reaction (S)-dihydroorotate + H2O = N-carbamoyl-L-aspartate + H(+). It functions in the pathway pyrimidine metabolism; UMP biosynthesis via de novo pathway; (S)-dihydroorotate from bicarbonate: step 3/3. Catalyzes the reversible cyclization of carbamoyl aspartate to dihydroorotate. This is Dihydroorotase from Synechocystis sp. (strain ATCC 27184 / PCC 6803 / Kazusa).